The primary structure comprises 110 residues: Iron-sulfur cluster assembly protein CyaY (110 aa).

Belongs to the frataxin family.

Involved in iron-sulfur (Fe-S) cluster assembly. May act as a regulator of Fe-S biogenesis. The protein is Iron-sulfur cluster assembly protein CyaY of Pseudomonas syringae pv. tomato (strain ATCC BAA-871 / DC3000).